Consider the following 58-residue polypeptide: DNA-directed RNA polymerases I, II, and III subunit RPABC4 (58 aa).

Residues Cys-19, Cys-22, Cys-36, and Cys-39 each coordinate Zn(2+). Residues 19 to 39 (CGECHTENEIKSRDPIRCREC) form a C4-type zinc finger.

Belongs to the archaeal Rpo12/eukaryotic RPC10 RNA polymerase subunit family. Component of the RNA polymerase I (Pol I), RNA polymerase II (Pol II) and RNA polymerase III (Pol III) complexes consisting of at least 13, 12 and 17 subunits, respectively. Pol I complex consists of a ten-subunit catalytic core composed of POLR1A/RPA1, POLR1B/RPA2, POLR1C/RPAC1, POLR1D/RPAC2, POLR1H/RPA12, POLR2E/RPABC1, POLR2F/RPABC2, POLR2H/RPABC3, POLR2K/RPABC4 and POLR2L/RPABC5; a mobile stalk subunit POLR1F/RPA43 protruding from the core and additional subunits homologous to general transcription factors POLR1E/RPA49 and POLR1G/RPA34. Part of Pol I pre-initiation complex (PIC), in which Pol I core assembles with RRN3 and promoter-bound UTBF and SL1/TIF-IB complex. Pol II complex contains a ten-subunit catalytic core composed of POLR2A/RPB1, POLR2B/RPB2, POLR2C/RPB3, POLR2I/RPB9, POLR2J/RPB11, POLR2E/RPABC1, POLR2F/RPABC2, POLR2H/RPABC3, POLR2K/RPABC4 and POLR2L/RPABC5 and a mobile stalk composed of two subunits POLR2D/RPB4 and POLR2G/RPB7. Part of Pol II(G) complex, in which Pol II core associates with an additional subunit POLR2M; unlike conventional Pol II, Pol II(G) functions as a transcriptional repressor. Part of TBP-based Pol II pre-initiation complex (PIC), in which Pol II core assembles with general transcription factors and other specific initiation factors including GTF2E1, GTF2E2, GTF2F1, GTF2F2, TCEA1, ERCC2, ERCC3, GTF2H2, GTF2H3, GTF2H4, GTF2H5, GTF2A1, GTF2A2, GTF2B and TBP; this large multi-subunit PIC complex mediates DNA unwinding and targets Pol II core to the transcription start site where the first phosphodiester bond forms. Pol III complex consists of a ten-subunit catalytic core composed of POLR3A/RPC1, POLR3B/RPC2, POLR1C/RPAC1, POLR1D/RPAC2, POLR3K/RPC10, POLR2E/RPABC1, POLR2F/RPABC2, POLR2H/RPABC3, POLR2K/RPABC4 and POLR2L/RPABC5; a mobile stalk composed of two subunits POLR3H/RPC8 and CRCP/RPC9, protruding from the core and functioning primarily in transcription initiation; and additional subunits homologous to general transcription factors of the RNA polymerase II machinery, POLR3C/RPC3-POLR3F/RPC6-POLR3G/RPC7 heterotrimer required for transcription initiation and POLR3D/RPC4-POLR3E/RPC5 heterodimer involved in both transcription initiation and termination.

It is found in the nucleus. The protein resides in the nucleolus. Its function is as follows. DNA-dependent RNA polymerase catalyzes the transcription of DNA into RNA using the four ribonucleoside triphosphates as substrates. Common component of RNA polymerases I, II and III which synthesize ribosomal RNA precursors, mRNA precursors and many functional non-coding RNAs, and a small RNAs, such as 5S rRNA and tRNAs, respectively. The polypeptide is DNA-directed RNA polymerases I, II, and III subunit RPABC4 (POLR2K) (Bos taurus (Bovine)).